Consider the following 1222-residue polypeptide: ATP-dependent helicase/nuclease subunit A (1222 aa).

The 457-residue stretch at 39–495 (QKRTAQQIEA…ILLKENFRSQ (457 aa)) folds into the UvrD-like helicase ATP-binding domain. 60-67 (ASAGSGKT) is a binding site for ATP. One can recognise a UvrD-like helicase C-terminal domain in the interval 524-810 (QLIAGSHAQT…NLMTIHKSKG (287 aa)).

This sequence belongs to the helicase family. AddA subfamily. In terms of assembly, heterodimer of AddA and AddB/RexB. Requires Mg(2+) as cofactor.

It carries out the reaction Couples ATP hydrolysis with the unwinding of duplex DNA by translocating in the 3'-5' direction.. It catalyses the reaction ATP + H2O = ADP + phosphate + H(+). Its function is as follows. The heterodimer acts as both an ATP-dependent DNA helicase and an ATP-dependent, dual-direction single-stranded exonuclease. Recognizes the chi site generating a DNA molecule suitable for the initiation of homologous recombination. The AddA nuclease domain is required for chi fragment generation; this subunit has the helicase and 3' -&gt; 5' nuclease activities. The chain is ATP-dependent helicase/nuclease subunit A from Streptococcus pyogenes serotype M12 (strain MGAS9429).